The chain runs to 341 residues: Acetylpolyamine amidohydrolase (341 aa).

H157 (proton donor/acceptor) is an active-site residue. Residues D192, H194, and D281 each coordinate Zn(2+).

The protein belongs to the histone deacetylase family. As to quaternary structure, homodimer. The cofactor is Zn(2+).

It catalyses the reaction N-acetylputrescine + H2O = putrescine + acetate. It carries out the reaction N-acetylcadaverine + H2O = cadaverine + acetate. Its pathway is amine and polyamine metabolism. Functionally, involved in polyamine metabolism. Catalyzes the deacetylation of various acetylated polyamines such as N-acetylputrescine and N-acetylcadaverine. This chain is Acetylpolyamine amidohydrolase, found in Burkholderia pseudomallei (strain 1710b).